The primary structure comprises 628 residues: Biosynthetic arginine decarboxylase (628 aa).

Position 101 is an N6-(pyridoxal phosphate)lysine (lysine 101). Position 281–291 (281–291 (VDVGGGLGVDY)) interacts with substrate.

Belongs to the Orn/Lys/Arg decarboxylase class-II family. SpeA subfamily. It depends on Mg(2+) as a cofactor. Requires pyridoxal 5'-phosphate as cofactor.

The enzyme catalyses L-arginine + H(+) = agmatine + CO2. It participates in amine and polyamine biosynthesis; agmatine biosynthesis; agmatine from L-arginine: step 1/1. Catalyzes the biosynthesis of agmatine from arginine. This is Biosynthetic arginine decarboxylase from Alkalilimnicola ehrlichii (strain ATCC BAA-1101 / DSM 17681 / MLHE-1).